A 496-amino-acid chain; its full sequence is Chromosomal replication initiator protein DnaA (496 aa).

The segment at 1 to 76 (MKMDSAVSEE…TELWQEENPQ (76 aa)) is domain I, interacts with DnaA modulators. The interval 76-150 (QILKVEVVVR…AAATGAVLGS (75 aa)) is domain II. The tract at residues 151–373 (PLDPRYTFDT…GAFNQLLFRQ (223 aa)) is domain III, AAA+ region. The ATP site is built by Gly-197, Gly-199, Lys-200, and Thr-201. Positions 374-496 (SFEPNISIDR…LKRLINDQAA (123 aa)) are domain IV, binds dsDNA.

It belongs to the DnaA family. As to quaternary structure, oligomerizes as a right-handed, spiral filament on DNA at oriC.

It is found in the cytoplasm. Functionally, plays an essential role in the initiation and regulation of chromosomal replication. ATP-DnaA binds to the origin of replication (oriC) to initiate formation of the DNA replication initiation complex once per cell cycle. Binds the DnaA box (a 9 base pair repeat at the origin) and separates the double-stranded (ds)DNA. Forms a right-handed helical filament on oriC DNA; dsDNA binds to the exterior of the filament while single-stranded (ss)DNA is stabiized in the filament's interior. The ATP-DnaA-oriC complex binds and stabilizes one strand of the AT-rich DNA unwinding element (DUE), permitting loading of DNA polymerase. After initiation quickly degrades to an ADP-DnaA complex that is not apt for DNA replication. Binds acidic phospholipids. This Brucella abortus biovar 1 (strain 9-941) protein is Chromosomal replication initiator protein DnaA.